The primary structure comprises 596 residues: Elongation factor 4 (596 aa).

Positions 2–184 (KQIRNFSIIA…VIVAKIPPPE (183 aa)) constitute a tr-type G domain. GTP contacts are provided by residues 14-19 (DHGKST) and 131-134 (NKID).

Belongs to the TRAFAC class translation factor GTPase superfamily. Classic translation factor GTPase family. LepA subfamily.

The protein localises to the cell inner membrane. The catalysed reaction is GTP + H2O = GDP + phosphate + H(+). Its function is as follows. Required for accurate and efficient protein synthesis under certain stress conditions. May act as a fidelity factor of the translation reaction, by catalyzing a one-codon backward translocation of tRNAs on improperly translocated ribosomes. Back-translocation proceeds from a post-translocation (POST) complex to a pre-translocation (PRE) complex, thus giving elongation factor G a second chance to translocate the tRNAs correctly. Binds to ribosomes in a GTP-dependent manner. The protein is Elongation factor 4 of Shewanella baltica (strain OS223).